Consider the following 479-residue polypeptide: MSQVDAEGVVDGLRRTYISGKTKSYEWRVSQLKALLKITTHHDKEVVEALRADLKKPEHEAYVHEIFMVSNACKSALKELHQWMKPQKVKTSLATYPSSAEIVSEPLGVVLVITAWNYPFLLALDPMIGAIAAGNCVVLKPSEIAPATSALLAKLLNQYVDTSAIRVVEGAVPEMQALLDQRWDKIFYTGSSKVGQIVLSSAAKHLTPVVLELGGKCPTVVDANIDLKVAARRIISWKWSGNSGQTCISPDYIITTEENAPKLVDAIKCELESFYGKDPLKSQDMSSIINERQFERMTGLLDDKKVSDKIVYGGQSDKSNLKIAPTILLDVSEDSSVMSEEIFGPLLPIITVGKIEECYKIIASKPKPLAAYLFTNDKKRTEEFVSNVSAGGITINDIALHFLEPRLPFGGVGESGMGSYHGKFSFDAFSHKKSVLKRSFGGEVAARYPPYAPWKLHFMEAILQGDIFGLLKAWLGWSS.

190–195 provides a ligand contact to NAD(+); that stretch reads GSSKVG. E212 (proton acceptor) is an active-site residue. C247 functions as the Nucleophile in the catalytic mechanism.

This sequence belongs to the aldehyde dehydrogenase family.

It localises to the plastid. The protein localises to the amyloplast. Its subcellular location is the chloroplast. It catalyses the reaction an aldehyde + NAD(+) + H2O = a carboxylate + NADH + 2 H(+). Its function is as follows. Oxidizes nonanal, propionaldehyde and acetaldehyde in vitro, in the following decreasing order of reactivity: nonanal, propionaldehyde, acetaldehyde. The sequence is that of Aldehyde dehydrogenase (ALDH) from Craterostigma plantagineum (Blue gem).